We begin with the raw amino-acid sequence, 460 residues long: Chromosomal replication initiator protein DnaA (460 aa).

The domain I, interacts with DnaA modulators stretch occupies residues 1-84; sequence MAVSLWQQCI…RFDIGSRPSA (84 aa). The domain II stretch occupies residues 84–123; that stretch reads AKKPEPAPVAAVRVPNPQTKASVGTSFNTTEPVANANHRS. The interval 124 to 340 is domain III, AAA+ region; it reads NINPTYQFDN…GALNRVIANA (217 aa). Residues Gly168, Gly170, Lys171, and Thr172 each coordinate ATP. Residues 341–460 are domain IV, binds dsDNA; that stretch reads NFTGRPITID…YANLIRTLSS (120 aa).

This sequence belongs to the DnaA family. In terms of assembly, oligomerizes as a right-handed, spiral filament on DNA at oriC.

Its subcellular location is the cytoplasm. Functionally, plays an essential role in the initiation and regulation of chromosomal replication. ATP-DnaA binds to the origin of replication (oriC) to initiate formation of the DNA replication initiation complex once per cell cycle. Binds the DnaA box (a 9 base pair repeat at the origin) and separates the double-stranded (ds)DNA. Forms a right-handed helical filament on oriC DNA; dsDNA binds to the exterior of the filament while single-stranded (ss)DNA is stabiized in the filament's interior. The ATP-DnaA-oriC complex binds and stabilizes one strand of the AT-rich DNA unwinding element (DUE), permitting loading of DNA polymerase. After initiation quickly degrades to an ADP-DnaA complex that is not apt for DNA replication. Binds acidic phospholipids. In Shewanella sp. (strain ANA-3), this protein is Chromosomal replication initiator protein DnaA.